Here is a 683-residue protein sequence, read N- to C-terminus: Leishmanolysin-like peptidase (683 aa).

A Zn(2+)-binding site is contributed by His257. Residue Glu258 is part of the active site. The Zn(2+) site is built by His261 and His364.

The protein belongs to the peptidase M8 family. The cofactor is Zn(2+).

The protein localises to the cytoplasm. Essential for the coordination of mitotic progression, and also plays a role in cell migration. The protein is Leishmanolysin-like peptidase (Invadolysin) of Drosophila melanogaster (Fruit fly).